The following is a 93-amino-acid chain: Cell division topological specificity factor (93 aa).

This sequence belongs to the MinE family.

Its function is as follows. Prevents the cell division inhibition by proteins MinC and MinD at internal division sites while permitting inhibition at polar sites. This ensures cell division at the proper site by restricting the formation of a division septum at the midpoint of the long axis of the cell. In Synechococcus sp. (strain WH7803), this protein is Cell division topological specificity factor.